The sequence spans 483 residues: MTATATEHVATAGATGRIARVIGPVVDVEFPADAIPSIYNALTTEITLNGQTKTITFETSQHLGDNLVRAISLQATDGLVRGTTVQDSGAPISVPVGDGVKGHIFNVLGKPLDVEESEIKADAYWPIHRKAPSFASLEGSTEMLETGIKVIDLLTPYIKGGKIGLFGGAGVGKTVLIQEMITRVARNFGGTSVFAGVGERTREGNDLWVEMEEAGVLKDTALVFGQMDEPPGTRLRVALSALTMAEYFRDVQNQDVLLFIDNIFRFTQAGSEVSTLLGRMPSAVGYQPNLADEMGLLQERITSTKGHSITSMQAIYVPADDYTDPAPATTFAHLDATTELSREIASRGLYPAVDPLTSTSRILDPQYIGKDHYNTAVRVKQILQKNKELQDIIAILGVDELSEEDKIVVSRARRIQQFLSQNTYTAKQFTGVEGSTVSIKDTVEGFTAICDGELDHIAEQAFFNVGGLDDVERNWAKIQEQTK.

167 to 174 (GGAGVGKT) serves as a coordination point for ATP.

Belongs to the ATPase alpha/beta chains family. In terms of assembly, F-type ATPases have 2 components, CF(1) - the catalytic core - and CF(0) - the membrane proton channel. CF(1) has five subunits: alpha(3), beta(3), gamma(1), delta(1), epsilon(1). CF(0) has three main subunits: a(1), b(2) and c(9-12). The alpha and beta chains form an alternating ring which encloses part of the gamma chain. CF(1) is attached to CF(0) by a central stalk formed by the gamma and epsilon chains, while a peripheral stalk is formed by the delta and b chains.

It localises to the cell membrane. It carries out the reaction ATP + H2O + 4 H(+)(in) = ADP + phosphate + 5 H(+)(out). In terms of biological role, produces ATP from ADP in the presence of a proton gradient across the membrane. The catalytic sites are hosted primarily by the beta subunits. This is ATP synthase subunit beta from Paenarthrobacter aurescens (strain TC1).